The following is a 222-amino-acid chain: Cytidylate kinase (222 aa).

10-18 (GTSSSGKSV) provides a ligand contact to ATP.

The protein belongs to the cytidylate kinase family. Type 1 subfamily.

It is found in the cytoplasm. It catalyses the reaction CMP + ATP = CDP + ADP. The catalysed reaction is dCMP + ATP = dCDP + ADP. This Mycoplasma capricolum subsp. capricolum (strain California kid / ATCC 27343 / NCTC 10154) protein is Cytidylate kinase.